Consider the following 416-residue polypeptide: Gamma-glutamyl phosphate reductase (416 aa).

It belongs to the gamma-glutamyl phosphate reductase family.

It localises to the cytoplasm. The catalysed reaction is L-glutamate 5-semialdehyde + phosphate + NADP(+) = L-glutamyl 5-phosphate + NADPH + H(+). Its pathway is amino-acid biosynthesis; L-proline biosynthesis; L-glutamate 5-semialdehyde from L-glutamate: step 2/2. In terms of biological role, catalyzes the NADPH-dependent reduction of L-glutamate 5-phosphate into L-glutamate 5-semialdehyde and phosphate. The product spontaneously undergoes cyclization to form 1-pyrroline-5-carboxylate. This is Gamma-glutamyl phosphate reductase from Halalkalibacterium halodurans (strain ATCC BAA-125 / DSM 18197 / FERM 7344 / JCM 9153 / C-125) (Bacillus halodurans).